The following is a 94-amino-acid chain: MNKTELIDGVAAAANLSKVEAGRAIDAVVNEITEALKEGDSVTLVGFGTFQVRQRAERPGRNPKTGEPIMIAASNNPSFKPGKALKDAVKSSAG.

The tract at residues 55-94 (RAERPGRNPKTGEPIMIAASNNPSFKPGKALKDAVKSSAG) is disordered. A compositionally biased stretch (basic and acidic residues) spans 84-94 (ALKDAVKSSAG).

The protein belongs to the bacterial histone-like protein family.

Histone-like DNA-binding protein which is capable of wrapping DNA to stabilize it, and thus to prevent its denaturation under extreme environmental conditions. This is DNA-binding protein HU (hup) from Xylella fastidiosa (strain Temecula1 / ATCC 700964).